The chain runs to 306 residues: Homoserine kinase (306 aa).

An ATP-binding site is contributed by 95–105 (PQSRGLGSSAA).

Belongs to the GHMP kinase family. Homoserine kinase subfamily.

The protein localises to the cytoplasm. The enzyme catalyses L-homoserine + ATP = O-phospho-L-homoserine + ADP + H(+). It functions in the pathway amino-acid biosynthesis; L-threonine biosynthesis; L-threonine from L-aspartate: step 4/5. Functionally, catalyzes the ATP-dependent phosphorylation of L-homoserine to L-homoserine phosphate. The protein is Homoserine kinase of Corynebacterium urealyticum (strain ATCC 43042 / DSM 7109).